A 270-amino-acid chain; its full sequence is Glutamate racemase (270 aa).

Residues 7–8 and 39–40 contribute to the substrate site; these read DS and YG. C70 functions as the Proton donor/acceptor in the catalytic mechanism. Residue 71–72 participates in substrate binding; sequence NT. The Proton donor/acceptor role is filled by C194. Residue 195–196 participates in substrate binding; that stretch reads TH.

Belongs to the aspartate/glutamate racemases family.

It catalyses the reaction L-glutamate = D-glutamate. It participates in cell wall biogenesis; peptidoglycan biosynthesis. Functionally, provides the (R)-glutamate required for cell wall biosynthesis. This is Glutamate racemase from Cereibacter sphaeroides (strain ATCC 17025 / ATH 2.4.3) (Rhodobacter sphaeroides).